Consider the following 24-residue polypeptide: 29 kDa outer membrane protein (24 aa).

It localises to the cell outer membrane. May be involved in transporting molecules across the outer membrane. This chain is 29 kDa outer membrane protein, found in Acinetobacter baumannii.